The following is a 259-amino-acid chain: 5'-nucleotidase SurE 1 (259 aa).

4 residues coordinate a divalent metal cation: Asp-16, Asp-17, Ser-48, and Asn-101.

This sequence belongs to the SurE nucleotidase family. It depends on a divalent metal cation as a cofactor.

It is found in the cytoplasm. The enzyme catalyses a ribonucleoside 5'-phosphate + H2O = a ribonucleoside + phosphate. Nucleotidase that shows phosphatase activity on nucleoside 5'-monophosphates. The chain is 5'-nucleotidase SurE 1 from Burkholderia lata (strain ATCC 17760 / DSM 23089 / LMG 22485 / NCIMB 9086 / R18194 / 383).